Consider the following 198-residue polypeptide: Ribonuclease HII (198 aa).

The RNase H type-2 domain maps to 6-198 (EQIAGVDEVG…APCQASLLPD (193 aa)). Residues aspartate 12, glutamate 13, and aspartate 108 each coordinate a divalent metal cation.

The protein belongs to the RNase HII family. Mn(2+) is required as a cofactor. It depends on Mg(2+) as a cofactor.

Its subcellular location is the cytoplasm. The catalysed reaction is Endonucleolytic cleavage to 5'-phosphomonoester.. Functionally, endonuclease that specifically degrades the RNA of RNA-DNA hybrids. The polypeptide is Ribonuclease HII (Acaryochloris marina (strain MBIC 11017)).